The primary structure comprises 675 residues: Heat shock 70 kDa protein, mitochondrial (675 aa).

A mitochondrion-targeting transit peptide spans M1–N52. Residues V639–K675 are disordered. The segment covering G649 to G661 has biased composition (gly residues). Positions P666–K675 are enriched in acidic residues.

Belongs to the heat shock protein 70 family.

It localises to the mitochondrion. This is Heat shock 70 kDa protein, mitochondrial (HSP1) from Pisum sativum (Garden pea).